Reading from the N-terminus, the 360-residue chain is Photosystem II protein D1 2 (360 aa).

Topologically, residues 1–31 are cytoplasmic; the sequence is MTTTLQQRESASLWEQFCQWVTSTNNRIYVG. Residues 32–53 form a helical membrane-spanning segment; the sequence is WFGTLMIPTLLTATTCFIIAFI. Residues 54-110 lie on the Lumenal, thylakoid side of the membrane; that stretch reads AAPPVDIDGIREPVAGSLLYGNNIISGAVVPSSNAIGLHFYPIWEAASLDEWLYNGG. A helical transmembrane segment spans residues 111-134; sequence PYQLVVFHFLIGIFCYMGRQWELS. His-118 contributes to the chlorophyll a binding site. Tyr-126 contributes to the pheophytin a binding site. The Cytoplasmic segment spans residues 135–142; the sequence is YRLGMRPW. Residues 143-161 traverse the membrane as a helical segment; it reads ICVAYSAPVSAATAVFLIY. Position 147 (Tyr-147) interacts with pheophytin a. The Lumenal, thylakoid segment spans residues 162–191; sequence PIGQGSFSDGMPLGISGTFNFMIVFQAEHN. [CaMn4O5] cluster contacts are provided by Asp-170 and Glu-189. The helical transmembrane segment at 192 to 218 threads the bilayer; it reads ILMHPFHMLGVAGVFGGSLFSAMHGSL. Position 198 (His-198) interacts with chlorophyll a. Positions 215, 264, and 265 each coordinate a quinone. Residue His-215 participates in Fe cation binding. Over 219–270 the chain is Cytoplasmic; that stretch reads VTSSLVRETTEVESQNYGYKFGQEEETYNIVAAHGYFGRLIFQYASFNNSRS. A helical transmembrane segment spans residues 271–295; that stretch reads LHFFLGAWPVIGIWFTAMGVSTMAF. His-272 serves as a coordination point for Fe cation. Over 296 to 360 the chain is Lumenal, thylakoid; the sequence is NLNGFNFNQS…VALTAPAVNG (65 aa). The [CaMn4O5] cluster site is built by His-332, Glu-333, His-337, Asp-342, and Ala-344. Residues 345-360 constitute a propeptide that is removed on maturation; the sequence is SGEQAPVALTAPAVNG.

This sequence belongs to the reaction center PufL/M/PsbA/D family. As to quaternary structure, PSII is composed of 1 copy each of membrane proteins PsbA, PsbB, PsbC, PsbD, PsbE, PsbF, PsbH, PsbI, PsbJ, PsbK, PsbL, PsbM, PsbT, PsbX, PsbY, PsbZ, Psb30/Ycf12, peripheral proteins PsbO, CyanoQ (PsbQ), PsbU, PsbV and a large number of cofactors. It forms dimeric complexes. The D1/D2 heterodimer binds P680, chlorophylls that are the primary electron donor of PSII, and subsequent electron acceptors. It shares a non-heme iron and each subunit binds pheophytin, quinone, additional chlorophylls, carotenoids and lipids. D1 provides most of the ligands for the Mn4-Ca-O5 cluster of the oxygen-evolving complex (OEC). There is also a Cl(-1) ion associated with D1 and D2, which is required for oxygen evolution. The PSII complex binds additional chlorophylls, carotenoids and specific lipids. is required as a cofactor. Post-translationally, C-terminally processed by CtpA; processing is essential to allow assembly of the oxygen-evolving complex and photosynthetic growth. In terms of processing, tyr-161 forms a radical intermediate that is referred to as redox-active TyrZ, YZ or Y-Z.

Its subcellular location is the cellular thylakoid membrane. The catalysed reaction is 2 a plastoquinone + 4 hnu + 2 H2O = 2 a plastoquinol + O2. Its function is as follows. Photosystem II (PSII) is a light-driven water:plastoquinone oxidoreductase that uses light energy to abstract electrons from H(2)O, generating O(2) and a proton gradient subsequently used for ATP formation. It consists of a core antenna complex that captures photons, and an electron transfer chain that converts photonic excitation into a charge separation. The D1/D2 (PsbA/PsbD) reaction center heterodimer binds P680, the primary electron donor of PSII as well as several subsequent electron acceptors. The protein is Photosystem II protein D1 2 of Synechocystis sp. (strain ATCC 27184 / PCC 6803 / Kazusa).